A 499-amino-acid polypeptide reads, in one-letter code: AP-1-like transcription factor CAP1 (499 aa).

Residues 1 to 64 (MTDIKRNFSD…RAYRERKERK (64 aa)) are disordered. Short sequence motifs (bipartite nuclear localization signal) lie at residues 20-27 (TKKLHVDS) and 44-51 (SKRTAQNR). One can recognise a bZIP domain in the interval 40–103 (TEPKSKRTAQ…DVLKNELAKY (64 aa)). Residues 43–66 (KSKRTAQNRAAQRAYRERKERKMK) are basic motif. Residues 49–105 (QNRAAQRAYRERKERKMKELEDKVRLLEDANVRALTETDFLRAQVDVLKNELAKYTG) adopt a coiled-coil conformation. Residues 68-75 (LEDKVRLL) are leucine-zipper. Residues 104-215 (TGGSDFSDLN…SSTPLNDNLL (112 aa)) are disordered. A compositionally biased stretch (polar residues) spans 123–148 (HPNNHHSNVSTGTPHGSMSSSNSVAS). Composition is skewed to low complexity over residues 155-164 (SSASSVSNNS) and 186-215 (QQQQQKVPQGVPDLVSGSSSSSTPLNDNLL). Residues 254 to 261 (CVKLNEAC) form a n-CRD region. Intrachain disulfides connect C254-C446 and C261-C477. The segment at 408 to 442 (PEKQEKGKYEPPSTSKTTNNNEEEDKDEVVPAPPQ) is disordered. Residues 417–427 (EPPSTSKTTNN) show a composition bias toward low complexity. The segment at 446–477 (CSEIWDRITSHPKYTELDIDGLCNELKSKAKC) is c-CRD. Positions 462–469 (LDIDGLCN) match the Nuclear export signal motif.

The protein belongs to the bZIP family. YAP subfamily. As to quaternary structure, interacts with YBP1. Post-translationally, upon oxidative stress, is oxidated by the peroxidase GPX3 and stabilized by YBP1. Oxidative stress induces conformational changes through oxidation of cysteine residues, masking the nuclear export signal, thus abolishing nuclear export by CRM1/exportin 1. In terms of processing, phosphorylated in response to H(2)O(2).

The protein resides in the nucleus. Its subcellular location is the cytoplasm. Functionally, transcription activator involved in multidrug resistance, oxidative stress response, and redox homeostasis. Preferentially binds to promoters with the core binding site 5'-TTA[CG]TAA-3'. Involved in the oxidative stress response in via multiple pathways, including the cellular antioxidant defense system, carbohydrate metabolism and energy metabolism, protein degradation, ATP-dependent RNA helicase, and resistance pathways. The ability of the major systemic fungal pathogen of humans to sense and respond to reactive oxygen species, such as H(2)O(2) generated by the host immune system, is required for survival in the host and therefore virulence. Regulates the transcription of COR33, GLR1, GTO1, GTT1, GTT1, TRR1, TRX1, SOD1, CAT1, and the transcription regulator TSA1. Participates in the apoptosis by regulating the expression of the glutathione reductase gene and glutathione content. Also plays a role in the peroxide-mediated induction of MDR1 and other drug response genes such as PDR16, MDR1, FLU1, YCF1, and FCR1. Regulates trehalose accumulation which is important for the oxidative stress tolerance. Recruits ADA2 to its target promoters. Activity of CAP1 is controlled through oxidation of specific cysteine residues resulting in the alteration of its subcellular location. Oxidative stress induces nuclear accumulation and as a result CAP1 transcriptional activity. Nuclear export is restored when disulfide bonds are reduced by thioredoxin, whose expression is controlled by CAP1, providing a mechanism for negative autoregulation. This Candida albicans (strain SC5314 / ATCC MYA-2876) (Yeast) protein is AP-1-like transcription factor CAP1.